Reading from the N-terminus, the 800-residue chain is Phenylalanine--tRNA ligase beta subunit (800 aa).

A tRNA-binding domain is found at 39 to 154; it reads TKDIKNLVVG…EAQVPGTDAL (116 aa). The region spanning 408 to 483 is the B5 domain; that stretch reads AFITPIDITA…RIYGYDDIPS (76 aa). D461, D467, E470, and E471 together coordinate Mg(2+). The FDX-ACB domain maps to 708 to 800; sequence PRFPGMSRDI…ALIEQGAVIR (93 aa).

The protein belongs to the phenylalanyl-tRNA synthetase beta subunit family. Type 1 subfamily. As to quaternary structure, tetramer of two alpha and two beta subunits. The cofactor is Mg(2+).

The protein localises to the cytoplasm. The catalysed reaction is tRNA(Phe) + L-phenylalanine + ATP = L-phenylalanyl-tRNA(Phe) + AMP + diphosphate + H(+). The protein is Phenylalanine--tRNA ligase beta subunit of Staphylococcus aureus (strain USA300).